We begin with the raw amino-acid sequence, 436 residues long: Histidinol dehydrogenase (436 aa).

Positions 136, 198, and 221 each coordinate NAD(+). The substrate site is built by Ser244, Gln266, and His269. Positions 266 and 269 each coordinate Zn(2+). Residues Glu334 and His335 each act as proton acceptor in the active site. The substrate site is built by His335, Asp368, Glu422, and His427. Asp368 serves as a coordination point for Zn(2+). His427 lines the Zn(2+) pocket.

It belongs to the histidinol dehydrogenase family. Zn(2+) serves as cofactor.

It carries out the reaction L-histidinol + 2 NAD(+) + H2O = L-histidine + 2 NADH + 3 H(+). It participates in amino-acid biosynthesis; L-histidine biosynthesis; L-histidine from 5-phospho-alpha-D-ribose 1-diphosphate: step 9/9. In terms of biological role, catalyzes the sequential NAD-dependent oxidations of L-histidinol to L-histidinaldehyde and then to L-histidine. The chain is Histidinol dehydrogenase from Dehalococcoides mccartyi (strain CBDB1).